A 414-amino-acid chain; its full sequence is L-cysteine:1D-myo-inositol 2-amino-2-deoxy-alpha-D-glucopyranoside ligase (414 aa).

Cysteine 43 provides a ligand contact to Zn(2+). L-cysteinyl-5'-AMP is bound by residues 43–46, threonine 58, and 81–83; these read CGIT and NVT. Positions 45–55 match the 'HIGH' region motif; that stretch reads ITPYDATHLGH. The short motif at 187-192 is the 'ERGGDP' region element; it reads ERGGDP. Position 227 (tryptophan 227) interacts with L-cysteinyl-5'-AMP. Cysteine 231 is a binding site for Zn(2+). Position 249–251 (249–251) interacts with L-cysteinyl-5'-AMP; that stretch reads GSD. A Zn(2+)-binding site is contributed by histidine 256. Isoleucine 283 contacts L-cysteinyl-5'-AMP. The 'KMSKS' region signature appears at 289-293; that stretch reads KMSKS.

The protein belongs to the class-I aminoacyl-tRNA synthetase family. MshC subfamily. As to quaternary structure, monomer. The cofactor is Zn(2+).

It catalyses the reaction 1D-myo-inositol 2-amino-2-deoxy-alpha-D-glucopyranoside + L-cysteine + ATP = 1D-myo-inositol 2-(L-cysteinylamino)-2-deoxy-alpha-D-glucopyranoside + AMP + diphosphate + H(+). Catalyzes the ATP-dependent condensation of GlcN-Ins and L-cysteine to form L-Cys-GlcN-Ins. The sequence is that of L-cysteine:1D-myo-inositol 2-amino-2-deoxy-alpha-D-glucopyranoside ligase from Tsukamurella paurometabola (strain ATCC 8368 / DSM 20162 / CCUG 35730 / CIP 100753 / JCM 10117 / KCTC 9821 / NBRC 16120 / NCIMB 702349 / NCTC 13040) (Corynebacterium paurometabolum).